Here is a 649-residue protein sequence, read N- to C-terminus: Quinol oxidase subunit 1 (649 aa).

Residues 1–13 (MKFKWDEFFVTGD) are Extracellular-facing. Residues 14 to 34 (PLILGAQVSIALSTIAIIFVL) form a helical membrane-spanning segment. Residues 35–55 (TYFKKWKWLWSEWITTVDHKK) are Cytoplasmic-facing. The helical transmembrane segment at 56 to 76 (LGIMYIISAVIMLFRGGVDGL) threads the bilayer. Over 77-104 (MMRAQLALPNNSFLDSNHYNEIFTTHGT) the chain is Extracellular. His-102 is a binding site for Fe(II)-heme a. Residues 105 to 125 (IMIIFMAMPFLIGLINVVVPL) form a helical membrane-spanning segment. The Cytoplasmic portion of the chain corresponds to 126–139 (QIGARDVAFPYLNN). A helical transmembrane segment spans residues 140–160 (LSFWTFFVGAMLFNISFVIGG). Over 161–187 (SPNAGWTSYMPLASNDMSPGPGENYYL) the chain is Extracellular. A helical transmembrane segment spans residues 188 to 208 (LGLQIAGIGTLMTGINFMVTI). The Cytoplasmic portion of the chain corresponds to 209–228 (LKMRTKGMTLMRMPMFTWTT). A helical transmembrane segment spans residues 229 to 249 (LITMVIIVFAFPVLTVALALL). Residues 250-273 (SFDRLFGAHFFTLEAGGMPMLWAN) are Extracellular-facing. The helical transmembrane segment at 274–294 (LFWIWGHPEVYIVILPAFGIF) threads the bilayer. Residues His-280 and Tyr-284 each coordinate Cu cation. The segment at residues 280 to 284 (HPEVY) is a cross-link (1'-histidyl-3'-tyrosine (His-Tyr)). Over 295-305 (SEIISSFARKQ) the chain is Cytoplasmic. A helical transmembrane segment spans residues 306-326 (LFGYTAMVGSIIAISVLSFLV). Over 327 to 342 (WTHHFFTMGNSASVNS) the chain is Extracellular. Positions 329 and 330 each coordinate Cu cation. A helical membrane pass occupies residues 343–363 (FFSITTMAISIPTGVKIFNWL). At 364–376 (FTMYKGRISFTTP) the chain is on the cytoplasmic side. Residues 377–397 (MLWALAFIPNFVIGGVTGVML) form a helical membrane-spanning segment. The Extracellular segment spans residues 398–415 (AMAAADYQYHNTYFLVSH). His-415 contacts heme a3. A helical transmembrane segment spans residues 416-436 (FHYVLIAGTVFACFAGFIFWY). His-417 contacts Fe(II)-heme a. Residues 437-451 (PKMFGHKLNERIGKW) are Cytoplasmic-facing. Residues 452–472 (FFWIFMIGFNICFFPQYFLGL) traverse the membrane as a helical segment. The Extracellular portion of the chain corresponds to 473–492 (QGMPRRIYTYGPNDGWTTLN). The chain crosses the membrane as a helical span at residues 493 to 513 (FISTVGAFMMGVGFLILCYNI). Residues 514–585 (YYSFRYSTRE…KFKKIHMPSN (72 aa)) are Cytoplasmic-facing. Residues 586 to 603 (SGRPFFMSVAFGIAGFGL) traverse the membrane as a helical segment. Residues 604–606 (VFE) lie on the Extracellular side of the membrane. A helical membrane pass occupies residues 607 to 624 (WYWMGVVGLIGVLLCMVL). The Cytoplasmic segment spans residues 625-649 (RSFEYDNGYYISVDEIKETERKISE).

It belongs to the heme-copper respiratory oxidase family. Requires Cu cation as cofactor. Ferriheme a is required as a cofactor. The cofactor is Heme A3..

The protein resides in the cell membrane. It carries out the reaction 2 a quinol + O2 = 2 a quinone + 2 H2O. The protein operates within energy metabolism; oxidative phosphorylation. Its function is as follows. Catalyzes quinol oxidation with the concomitant reduction of oxygen to water. Major component for energy conversion during vegetative growth. The sequence is that of Quinol oxidase subunit 1 (qoxB) from Bacillus spizizenii (strain ATCC 23059 / NRRL B-14472 / W23) (Bacillus subtilis subsp. spizizenii).